Consider the following 156-residue polypeptide: Ribosomal RNA large subunit methyltransferase H (156 aa).

Residues leucine 73, glycine 104, and 123 to 128 (LSALTL) contribute to the S-adenosyl-L-methionine site.

This sequence belongs to the RNA methyltransferase RlmH family. As to quaternary structure, homodimer.

The protein resides in the cytoplasm. The enzyme catalyses pseudouridine(1915) in 23S rRNA + S-adenosyl-L-methionine = N(3)-methylpseudouridine(1915) in 23S rRNA + S-adenosyl-L-homocysteine + H(+). Specifically methylates the pseudouridine at position 1915 (m3Psi1915) in 23S rRNA. In Colwellia psychrerythraea (strain 34H / ATCC BAA-681) (Vibrio psychroerythus), this protein is Ribosomal RNA large subunit methyltransferase H.